Reading from the N-terminus, the 105-residue chain is MSFKEITPQQAWEMMQQGAILVDIRDNMRFAYSHPKGAFHLTNQSFLQFEELADFDSPIIVSCYHGVSSRNVATFLVEQGYKNVFSMIGGFDGWCRAELPIDTTY.

The region spanning 15–103 (MQQGAILVDI…WCRAELPIDT (89 aa)) is the Rhodanese domain. Residue cysteine 63 is the Cysteine persulfide intermediate of the active site.

This sequence belongs to the GlpE family.

It is found in the cytoplasm. The catalysed reaction is thiosulfate + hydrogen cyanide = thiocyanate + sulfite + 2 H(+). The enzyme catalyses thiosulfate + [thioredoxin]-dithiol = [thioredoxin]-disulfide + hydrogen sulfide + sulfite + 2 H(+). In terms of biological role, transferase that catalyzes the transfer of sulfur from thiosulfate to thiophilic acceptors such as cyanide or dithiols. May function in a CysM-independent thiosulfate assimilation pathway by catalyzing the conversion of thiosulfate to sulfite, which can then be used for L-cysteine biosynthesis. This Haemophilus influenzae (strain 86-028NP) protein is Thiosulfate sulfurtransferase GlpE.